A 342-amino-acid chain; its full sequence is Biotin synthase (342 aa).

The 226-residue stretch at 63–288 folds into the Radical SAM core domain; the sequence is PEVEVEGIIS…RTMLRFAGGR (226 aa). 3 residues coordinate [4Fe-4S] cluster: cysteine 78, cysteine 82, and cysteine 85. Cysteine 121, cysteine 154, cysteine 213, and arginine 283 together coordinate [2Fe-2S] cluster.

Belongs to the radical SAM superfamily. Biotin synthase family. Homodimer. It depends on [4Fe-4S] cluster as a cofactor. The cofactor is [2Fe-2S] cluster.

The catalysed reaction is (4R,5S)-dethiobiotin + (sulfur carrier)-SH + 2 reduced [2Fe-2S]-[ferredoxin] + 2 S-adenosyl-L-methionine = (sulfur carrier)-H + biotin + 2 5'-deoxyadenosine + 2 L-methionine + 2 oxidized [2Fe-2S]-[ferredoxin]. The protein operates within cofactor biosynthesis; biotin biosynthesis; biotin from 7,8-diaminononanoate: step 2/2. Functionally, catalyzes the conversion of dethiobiotin (DTB) to biotin by the insertion of a sulfur atom into dethiobiotin via a radical-based mechanism. The protein is Biotin synthase of Mycobacteroides abscessus (strain ATCC 19977 / DSM 44196 / CCUG 20993 / CIP 104536 / JCM 13569 / NCTC 13031 / TMC 1543 / L948) (Mycobacterium abscessus).